The sequence spans 239 residues: Thymidylate kinase (239 aa).

Position 10–17 (10–17 (GVNRVGKS)) interacts with ATP.

This sequence belongs to the thymidylate kinase family.

The catalysed reaction is dTMP + ATP = dTDP + ADP. The protein operates within pyrimidine metabolism; dTTP biosynthesis. Functionally, catalyzes the conversion of dTMP to dTDP. The protein is Thymidylate kinase (TMK) of African swine fever virus (isolate Tick/South Africa/Pretoriuskop Pr4/1996) (ASFV).